The sequence spans 87 residues: Large ribosomal subunit protein bL31B (87 aa).

The protein belongs to the bacterial ribosomal protein bL31 family. Type B subfamily. As to quaternary structure, part of the 50S ribosomal subunit.

This is Large ribosomal subunit protein bL31B from Klebsiella pneumoniae (strain 342).